We begin with the raw amino-acid sequence, 305 residues long: MTGRNQHNGFQFATAVQPATGAYMSAFGNNSETEYSEEDGEAFELRSRGRERHHRSTSRDRKDDIVYLIREIKEGDTLISISLQYFCTVADIKRANNLLTEQDFFALRSLRIPVRKFSSFTETHNTAPHKSSSPSGTCRITETPVSGASLDSTSSSSSADSVECFLQEKDKDIQQLVKSSAPSRNSLSEVVSSLEQPLLGDAERRPAIKKDPYYGADWGMRWWTAVAIMLVVGIVTPVFYLLYYEVLMKADVSHHTTIDSIRPGPTQPAIAEPLVLPQANAAPHQDSHLLPVIEQQHHVKHQEET.

The Extracellular portion of the chain corresponds to 1-221; sequence MTGRNQHNGF…PYYGADWGMR (221 aa). Residue asparagine 29 is glycosylated (N-linked (GlcNAc...) asparagine). A disordered region spans residues 31 to 60; that stretch reads SETEYSEEDGEAFELRSRGRERHHRSTSRD. Residues 68 to 112 enclose the LysM domain; sequence LIREIKEGDTLISISLQYFCTVADIKRANNLLTEQDFFALRSLRI. The span at 121 to 144 shows a compositional bias: polar residues; that stretch reads TETHNTAPHKSSSPSGTCRITETP. The segment at 121-156 is disordered; sequence TETHNTAPHKSSSPSGTCRITETPVSGASLDSTSSS. Residues 146–156 show a composition bias toward low complexity; sequence SGASLDSTSSS. The helical transmembrane segment at 222–242 threads the bilayer; that stretch reads WWTAVAIMLVVGIVTPVFYLL. At 243-305 the chain is on the cytoplasmic side; the sequence is YYEVLMKADV…QHHVKHQEET (63 aa).

It localises to the cell membrane. Its subcellular location is the golgi apparatus. Its function is as follows. Essential for Golgi structural integrity. The sequence is that of LysM and putative peptidoglycan-binding domain-containing protein 3 (lysmd3) from Danio rerio (Zebrafish).